The following is a 347-amino-acid chain: MTVVPVKLNELKNKLVIIDQTLLPNEEKFLELDNPEEIWEAIKKLRVRGAPAIGIAAAFGLYVSTLKSKAANVAQFKKEFEEVRDYFATSRPTAVNLFWALKRMTRRFEQEEDKTVDKIKQALLDESEKIFAEDQEMSKAIGKHGLSLLKPGMGLLTHCNAGGLASSGYGTALAPIYLGHEKGYNFKVYADETRPLLQGARLTTYELYKAGIDVTLICDDMASLVMKEGKIDAVLVGCDRVAANGDTANKIGTSGLAVLAKEYGIPMYILGPTSTIDLDASTGEDIKIELRDEEEVVNGFGRRTALKGVKAYNPAFDVTDAKYITAIITEKGIVMQPYKESLKKLFE.

Substrate is bound by residues 48 to 50 (RGA), R91, and Q198. D239 (proton donor) is an active-site residue. 249–250 (NK) contacts substrate.

This sequence belongs to the EIF-2B alpha/beta/delta subunits family. DrdI subfamily.

The catalysed reaction is 5-deoxy-alpha-D-ribose 1-phosphate = 5-deoxy-D-ribulose 1-phosphate. It functions in the pathway carbohydrate degradation. Its function is as follows. Catalyzes the isomerization of 5-deoxy-alpha-D-ribose 1-phosphate to 5-deoxy-D-ribulose 1-phosphate, as part of a 5-deoxyribose salvage pathway that recycles this toxic radical SAM enzyme by-product to mainstream metabolites. This is 5-deoxyribose 1-phosphate isomerase from Petrotoga mobilis (strain DSM 10674 / SJ95).